The sequence spans 323 residues: UDP-N-acetylenolpyruvoylglucosamine reductase (323 aa).

The region spanning 33–214 (IGGPAEALFC…LSAVFTLTHG (182 aa)) is the FAD-binding PCMH-type domain. Residue serine 243 is the Proton donor of the active site. Glutamate 315 is an active-site residue.

The protein belongs to the MurB family. The cofactor is FAD.

It localises to the cytoplasm. It catalyses the reaction UDP-N-acetyl-alpha-D-muramate + NADP(+) = UDP-N-acetyl-3-O-(1-carboxyvinyl)-alpha-D-glucosamine + NADPH + H(+). The protein operates within cell wall biogenesis; peptidoglycan biosynthesis. Its function is as follows. Cell wall formation. This chain is UDP-N-acetylenolpyruvoylglucosamine reductase, found in Treponema denticola (strain ATCC 35405 / DSM 14222 / CIP 103919 / JCM 8153 / KCTC 15104).